We begin with the raw amino-acid sequence, 260 residues long: Ribosomal RNA small subunit methyltransferase G (260 aa).

The segment at 1-45 is disordered; sequence MKQRGPAGGRSSSPKPSAPGSGAGEGPDGRSAPASQKINKASAND. Residues 9–20 show a composition bias toward low complexity; that stretch reads GRSSSPKPSAPG. Residues 33–45 are compositionally biased toward polar residues; that stretch reads PASQKINKASAND. Residues G123, F128, and R193 each contribute to the S-adenosyl-L-methionine site.

Belongs to the methyltransferase superfamily. RNA methyltransferase RsmG family.

It is found in the cytoplasm. It catalyses the reaction guanosine(527) in 16S rRNA + S-adenosyl-L-methionine = N(7)-methylguanosine(527) in 16S rRNA + S-adenosyl-L-homocysteine. Its function is as follows. Specifically methylates the N7 position of guanine in position 527 of 16S rRNA. This chain is Ribosomal RNA small subunit methyltransferase G, found in Bradyrhizobium diazoefficiens (strain JCM 10833 / BCRC 13528 / IAM 13628 / NBRC 14792 / USDA 110).